Reading from the N-terminus, the 399-residue chain is Elongation factor Tu (399 aa).

In terms of domain architecture, tr-type G spans 10-204 (KPHVNIGTIG…AVDASIPEPE (195 aa)). The G1 stretch occupies residues 19-26 (GHVDHGKT). 19 to 26 (GHVDHGKT) lines the GTP pocket. Thr-26 serves as a coordination point for Mg(2+). Residues 60-64 (GITIN) are G2. The G3 stretch occupies residues 81–84 (DCPG). GTP is bound by residues 81 to 85 (DCPGH) and 136 to 139 (NKCD). The interval 136 to 139 (NKCD) is G4. Residues 174–176 (SGL) form a G5 region.

The protein belongs to the TRAFAC class translation factor GTPase superfamily. Classic translation factor GTPase family. EF-Tu/EF-1A subfamily. Monomer.

It localises to the cytoplasm. It catalyses the reaction GTP + H2O = GDP + phosphate + H(+). Functionally, GTP hydrolase that promotes the GTP-dependent binding of aminoacyl-tRNA to the A-site of ribosomes during protein biosynthesis. This is Elongation factor Tu from Synechococcus sp. (strain CC9311).